The primary structure comprises 1088 residues: Ran-binding protein 17 (1088 aa).

Ala-2 is modified (N-acetylalanine). At Ser-569 the chain carries Phosphoserine.

This sequence belongs to the exportin family. As to quaternary structure, binds to nucleoporins and the GTP-bound form of Ran. Highly expressed in testis, moderately in pancreas and weakly in other tissues studied.

It is found in the cytoplasm. It localises to the nucleus. Its subcellular location is the nuclear pore complex. May function as a nuclear transport receptor. The chain is Ran-binding protein 17 (RANBP17) from Homo sapiens (Human).